The chain runs to 293 residues: Glutamyl-Q tRNA(Asp) synthetase (293 aa).

Residues 9 to 13 and Glu-45 contribute to the L-glutamate site; that span reads RFAPS. The short motif at 12-22 is the 'HIGH' region element; that stretch reads PSPSGSLHFGS. Zn(2+)-binding residues include Cys-101, Cys-103, Tyr-115, and Cys-119. Residues Tyr-172 and Arg-190 each contribute to the L-glutamate site. The 'KMSKS' region motif lies at 228–232; it reads KLSKQ. Lys-231 lines the ATP pocket.

It belongs to the class-I aminoacyl-tRNA synthetase family. GluQ subfamily. It depends on Zn(2+) as a cofactor.

Functionally, catalyzes the tRNA-independent activation of glutamate in presence of ATP and the subsequent transfer of glutamate onto a tRNA(Asp). Glutamate is transferred on the 2-amino-5-(4,5-dihydroxy-2-cyclopenten-1-yl) moiety of the queuosine in the wobble position of the QUC anticodon. The chain is Glutamyl-Q tRNA(Asp) synthetase from Shewanella frigidimarina (strain NCIMB 400).